A 149-amino-acid chain; its full sequence is Cytochrome c oxidase subunit 5A, mitochondrial (149 aa).

This sequence belongs to the cytochrome c oxidase subunit 5A family. Component of the cytochrome c oxidase (complex IV, CIV), a multisubunit enzyme composed of a catalytic core of 3 subunits and several supernumerary subunits. The complex exists as a monomer or a dimer and forms supercomplexes (SCs) in the inner mitochondrial membrane with ubiquinol-cytochrome c oxidoreductase (cytochrome b-c1 complex, complex III, CIII).

The protein resides in the mitochondrion inner membrane. It functions in the pathway energy metabolism; oxidative phosphorylation. Component of the cytochrome c oxidase, the last enzyme in the mitochondrial electron transport chain which drives oxidative phosphorylation. The respiratory chain contains 3 multisubunit complexes succinate dehydrogenase (complex II, CII), ubiquinol-cytochrome c oxidoreductase (cytochrome b-c1 complex, complex III, CIII) and cytochrome c oxidase (complex IV, CIV), that cooperate to transfer electrons derived from NADH and succinate to molecular oxygen, creating an electrochemical gradient over the inner membrane that drives transmembrane transport and the ATP synthase. Cytochrome c oxidase is the component of the respiratory chain that catalyzes the reduction of oxygen to water. Electrons originating from reduced cytochrome c in the intermembrane space (IMS) are transferred via the dinuclear copper A center (CU(A)) of subunit 2 and heme A of subunit 1 to the active site in subunit 1, a binuclear center (BNC) formed by heme A3 and copper B (CU(B)). The BNC reduces molecular oxygen to 2 water molecules using 4 electrons from cytochrome c in the IMS and 4 protons from the mitochondrial matrix. This chain is Cytochrome c oxidase subunit 5A, mitochondrial, found in Drosophila melanogaster (Fruit fly).